The chain runs to 350 residues: Fe(3+) ions import ATP-binding protein FbpC (350 aa).

Positions 4–236 (LDIINLSKSF…PNDEQTAHFL (233 aa)) constitute an ABC transporter domain. 36 to 43 (GPSGSGKT) contributes to the ATP binding site.

This sequence belongs to the ABC transporter superfamily. Fe(3+) ion importer (TC 3.A.1.10) family. The complex is composed of two ATP-binding proteins (FbpC), two transmembrane proteins (FbpB) and a solute-binding protein (FbpA).

It localises to the cell inner membrane. It carries out the reaction Fe(3+)(out) + ATP + H2O = Fe(3+)(in) + ADP + phosphate + H(+). Functionally, part of the ABC transporter complex FbpABC involved in Fe(3+) ions import. Responsible for energy coupling to the transport system. This Pseudomonas fluorescens (strain Pf0-1) protein is Fe(3+) ions import ATP-binding protein FbpC.